Reading from the N-terminus, the 430-residue chain is Transcriptional regulatory protein RXT2 (430 aa).

A disordered region spans residues 408 to 430 (EIENTMEDGVVDDNEPDEEANRA).

The protein belongs to the RXT2 family. As to quaternary structure, component of the RPD3C(L) complex composed of at least ASH1, CTI6, DEP1, PHO23, RPD3, RXT2, RXT3, SAP30, SDS3, SIN3, UME1 and UME6.

The protein localises to the nucleus. In terms of biological role, component of the RPD3C(L) histone deacetylase complex (HDAC) responsible for the deacetylation of lysine residues on the N-terminal part of the core histones (H2A, H2B, H3 and H4). Histone deacetylation gives a tag for epigenetic repression and plays an important role in transcriptional regulation, cell cycle progression and developmental events. This Saccharomyces cerevisiae (strain ATCC 204508 / S288c) (Baker's yeast) protein is Transcriptional regulatory protein RXT2 (RXT2).